Consider the following 77-residue polypeptide: Putative defensin-like protein 129 (77 aa).

Positions 1 to 25 (MTKNTALTIFMVVLVIEMVMEETQG) are cleaved as a signal peptide. 4 cysteine pairs are disulfide-bonded: C28–C77, C37–C59, C42–C71, and C46–C73.

It belongs to the DEFL family.

It is found in the secreted. This is Putative defensin-like protein 129 (LCR13) from Arabidopsis thaliana (Mouse-ear cress).